Here is a 220-residue protein sequence, read N- to C-terminus: Octanoyltransferase (220 aa).

In terms of domain architecture, BPL/LPL catalytic spans 36–212 (ADSPDQFWLV…CLARQLGRRL (177 aa)). Residues 75-82 (RGGQVTYH), 142-144 (SLG), and 155-157 (GVA) each bind substrate. Catalysis depends on C173, which acts as the Acyl-thioester intermediate.

Belongs to the LipB family.

Its subcellular location is the cytoplasm. It catalyses the reaction octanoyl-[ACP] + L-lysyl-[protein] = N(6)-octanoyl-L-lysyl-[protein] + holo-[ACP] + H(+). It functions in the pathway protein modification; protein lipoylation via endogenous pathway; protein N(6)-(lipoyl)lysine from octanoyl-[acyl-carrier-protein]: step 1/2. Its function is as follows. Catalyzes the transfer of endogenously produced octanoic acid from octanoyl-acyl-carrier-protein onto the lipoyl domains of lipoate-dependent enzymes. Lipoyl-ACP can also act as a substrate although octanoyl-ACP is likely to be the physiological substrate. The polypeptide is Octanoyltransferase (Chromohalobacter salexigens (strain ATCC BAA-138 / DSM 3043 / CIP 106854 / NCIMB 13768 / 1H11)).